Here is a 430-residue protein sequence, read N- to C-terminus: Serine--tRNA ligase (430 aa).

236 to 238 serves as a coordination point for L-serine; that stretch reads TAE. 267-269 provides a ligand contact to ATP; sequence RRE. Glutamate 290 contributes to the L-serine binding site. Residue 354–357 participates in ATP binding; that stretch reads EISS. Serine 390 provides a ligand contact to L-serine.

It belongs to the class-II aminoacyl-tRNA synthetase family. Type-1 seryl-tRNA synthetase subfamily. In terms of assembly, homodimer. The tRNA molecule binds across the dimer.

The protein localises to the cytoplasm. It catalyses the reaction tRNA(Ser) + L-serine + ATP = L-seryl-tRNA(Ser) + AMP + diphosphate + H(+). It carries out the reaction tRNA(Sec) + L-serine + ATP = L-seryl-tRNA(Sec) + AMP + diphosphate + H(+). It functions in the pathway aminoacyl-tRNA biosynthesis; selenocysteinyl-tRNA(Sec) biosynthesis; L-seryl-tRNA(Sec) from L-serine and tRNA(Sec): step 1/1. Catalyzes the attachment of serine to tRNA(Ser). Is also able to aminoacylate tRNA(Sec) with serine, to form the misacylated tRNA L-seryl-tRNA(Sec), which will be further converted into selenocysteinyl-tRNA(Sec). In Gloeothece citriformis (strain PCC 7424) (Cyanothece sp. (strain PCC 7424)), this protein is Serine--tRNA ligase.